The following is a 719-amino-acid chain: 1,4-alpha-glucan branching enzyme GlgB (719 aa).

Asp-400 functions as the Nucleophile in the catalytic mechanism. The Proton donor role is filled by Glu-453.

This sequence belongs to the glycosyl hydrolase 13 family. GlgB subfamily. As to quaternary structure, monomer.

It carries out the reaction Transfers a segment of a (1-&gt;4)-alpha-D-glucan chain to a primary hydroxy group in a similar glucan chain.. Its pathway is glycan biosynthesis; glycogen biosynthesis. Functionally, catalyzes the formation of the alpha-1,6-glucosidic linkages in glycogen by scission of a 1,4-alpha-linked oligosaccharide from growing alpha-1,4-glucan chains and the subsequent attachment of the oligosaccharide to the alpha-1,6 position. This Chlamydia caviae (strain ATCC VR-813 / DSM 19441 / 03DC25 / GPIC) (Chlamydophila caviae) protein is 1,4-alpha-glucan branching enzyme GlgB.